A 238-amino-acid chain; its full sequence is Ribonuclease PH (238 aa).

Phosphate contacts are provided by residues R86 and G124–R126.

It belongs to the RNase PH family. Homohexameric ring arranged as a trimer of dimers.

The catalysed reaction is tRNA(n+1) + phosphate = tRNA(n) + a ribonucleoside 5'-diphosphate. Phosphorolytic 3'-5' exoribonuclease that plays an important role in tRNA 3'-end maturation. Removes nucleotide residues following the 3'-CCA terminus of tRNAs; can also add nucleotides to the ends of RNA molecules by using nucleoside diphosphates as substrates, but this may not be physiologically important. Probably plays a role in initiation of 16S rRNA degradation (leading to ribosome degradation) during starvation. The sequence is that of Ribonuclease PH from Caulobacter vibrioides (strain ATCC 19089 / CIP 103742 / CB 15) (Caulobacter crescentus).